The following is a 96-amino-acid chain: Myoglobin (96 aa).

A Globin domain is found at 1-96 (GLSDGEWQLV…AKTKELGFLG (96 aa)). Phosphoserine is present on serine 3. Histidine 61 provides a ligand contact to nitrite. Histidine 61 contributes to the O2 binding site. Threonine 64 bears the Phosphothreonine mark.

This sequence belongs to the globin family. As to quaternary structure, monomeric.

The protein resides in the cytoplasm. It is found in the sarcoplasm. The catalysed reaction is Fe(III)-heme b-[protein] + nitric oxide + H2O = Fe(II)-heme b-[protein] + nitrite + 2 H(+). It catalyses the reaction H2O2 + AH2 = A + 2 H2O. Functionally, monomeric heme protein which primary function is to store oxygen and facilitate its diffusion within muscle tissues. Reversibly binds oxygen through a pentacoordinated heme iron and enables its timely and efficient release as needed during periods of heightened demand. Depending on the oxidative conditions of tissues and cells, and in addition to its ability to bind oxygen, it also has a nitrite reductase activity whereby it regulates the production of bioactive nitric oxide. Under stress conditions, like hypoxia and anoxia, it also protects cells against reactive oxygen species thanks to its pseudoperoxidase activity. This Ailuropoda melanoleuca (Giant panda) protein is Myoglobin (MB).